Reading from the N-terminus, the 189-residue chain is Casparian strip membrane protein 2 (189 aa).

Residues 1-21 are disordered; sequence MKVSTIESGEISKGASSPRKG. The Cytoplasmic portion of the chain corresponds to 1 to 25; it reads MKVSTIESGEISKGASSPRKGMKRG. The chain crosses the membrane as a helical span at residues 26-46; sequence LSIMDFILRIFAAMSTLGSAL. The Extracellular portion of the chain corresponds to 47 to 73; that stretch reads SMGTAKQTMPFATRFVRFKVSFHDLPT. The helical transmembrane segment at 74–94 threads the bilayer; sequence FLFFVTANSIVCGYLALSLVL. Over 95–108 the chain is Cytoplasmic; the sequence is SFFHIVRTISVKSR. The chain crosses the membrane as a helical span at residues 109–129; that stretch reads ILLVFLDTVMFGLLTSGASAA. The Extracellular segment spans residues 130 to 163; the sequence is AAIVYVAHYGNPSANWFPFCQQYNSFCGRISGSL. The chain crosses the membrane as a helical span at residues 164–184; the sequence is VGSFIAVVIFMILILMSGISI. Residues 185–189 lie on the Cytoplasmic side of the membrane; the sequence is SKSKH.

It belongs to the Casparian strip membrane proteins (CASP) family. As to quaternary structure, homodimer and heterodimers.

It is found in the cell membrane. Regulates membrane-cell wall junctions and localized cell wall deposition. Required for establishment of the Casparian strip membrane domain (CSD) and the subsequent formation of Casparian strips, a cell wall modification of the root endodermis that determines an apoplastic barrier between the intraorganismal apoplasm and the extraorganismal apoplasm and prevents lateral diffusion. In Medicago truncatula (Barrel medic), this protein is Casparian strip membrane protein 2.